A 224-amino-acid chain; its full sequence is Envelope glycoprotein L (224 aa).

Residues 1 to 22 (MGILGWVGLIAVGVLCVRGGLS) form the signal peptide. An interaction with gH region spans residues 20-161 (GLSSTEYVIR…FDYSRTRRCV (142 aa)). Residues 20 to 161 (GLSSTEYVIR…FDYSRTRRCV (142 aa)) are interaction with gL. Positions 23 to 201 (STEYVIRSRV…LTTPPPIIAT (179 aa)) constitute a gL alphaherpesvirus-type domain. Disulfide bonds link C44-C76 and C149-C160. The tract at residues 161–224 (VGRQDLGPTN…RRRRPHSRRL (64 aa)) is disordered. N-linked (GlcNAc...) asparagine; by host glycosylation is present at N170. Over residues 213–224 (KSRRRRPHSRRL) the composition is skewed to basic residues.

It belongs to the herpesviridae glycoprotein L (gL) family. Alphaherpesvirinae gL subfamily. Interacts with glycoprotein H (gH); this interaction is necessary for the correct processing and cell surface expression of gH. The heterodimer gH/gL seems to interact with gB trimers during fusion. N-glycosylated, O-glycosylated, and sialylated.

The protein localises to the virion membrane. Its subcellular location is the host cell membrane. The protein resides in the host Golgi apparatus. It localises to the host trans-Golgi network. Its function is as follows. The heterodimer glycoprotein H-glycoprotein L is required for the fusion of viral and plasma membranes leading to virus entry into the host cell. Acts as a functional inhibitor of gH and maintains gH in an inhibited form. Upon binding to host integrins, gL dissociates from gH leading to activation of the viral fusion glycoproteins gB and gH. The sequence is that of Envelope glycoprotein L from Human herpesvirus 1 (strain KOS) (HHV-1).